A 279-amino-acid polypeptide reads, in one-letter code: Tryptophan 2,3-dioxygenase (279 aa).

Substrate-binding positions include 48-52, Tyr110, and Arg114; that span reads FIIQH. His237 contributes to the heme binding site. Substrate is bound at residue Thr251.

Belongs to the tryptophan 2,3-dioxygenase family. Homotetramer. Heme is required as a cofactor.

The catalysed reaction is L-tryptophan + O2 = N-formyl-L-kynurenine. Its pathway is amino-acid degradation; L-tryptophan degradation via kynurenine pathway; L-kynurenine from L-tryptophan: step 1/2. Functionally, heme-dependent dioxygenase that catalyzes the oxidative cleavage of the L-tryptophan (L-Trp) pyrrole ring and converts L-tryptophan to N-formyl-L-kynurenine. Catalyzes the oxidative cleavage of the indole moiety. This Bradyrhizobium diazoefficiens (strain JCM 10833 / BCRC 13528 / IAM 13628 / NBRC 14792 / USDA 110) protein is Tryptophan 2,3-dioxygenase.